The chain runs to 575 residues: Regulatory protein zeste (575 aa).

Residues 1–26 (MSAQGEGGGAGGSGGGGAGSDGGGNA) are compositionally biased toward gly residues. Disordered stretches follow at residues 1-53 (MSAQ…LPLT) and 151-174 (SVASAVPQQQQQQHHQQHDSVKVE). Positions 2–47 (SAQGEGGGAGGSGGGGAGSDGGGNAGQSSTGSGTVAVTNGGNSSAK) are hydrophobic. A compositionally biased stretch (polar residues) spans 31-51 (TGSGTVAVTNGGNSSAKNQLP). The DNA-binding element occupies 48-128 (NQLPLTPRFT…WLNSRLRKQY (81 aa)). Positions 151–164 (SVASAVPQQQQQQH) are enriched in low complexity.

Self-associates forming complexes of several hundred monomers.

The protein resides in the nucleus. Its function is as follows. Involved in transvection phenomena (= synapsis-dependent gene expression), where the synaptic pairing of chromosomes carrying genes with which zeste interacts influences the expression of these genes. Zeste binds to DNA and stimulates transcription from a nearby promoter. In Drosophila melanogaster (Fruit fly), this protein is Regulatory protein zeste (z).